The following is a 129-amino-acid chain: Glycine cleavage system H protein (129 aa).

Residues 24–106 form the Lipoyl-binding domain; that stretch reads LVRVGISAFA…HGEGWLLVLR (83 aa). An N6-lipoyllysine modification is found at Lys65.

This sequence belongs to the GcvH family. The glycine cleavage system is composed of four proteins: P, T, L and H. The cofactor is (R)-lipoate.

The glycine cleavage system catalyzes the degradation of glycine. The H protein shuttles the methylamine group of glycine from the P protein to the T protein. The chain is Glycine cleavage system H protein from Synechococcus sp. (strain CC9605).